We begin with the raw amino-acid sequence, 967 residues long: LRR receptor-like serine/threonine-protein kinase ERL2 (967 aa).

The first 27 residues, 1–27 (MRRIETMKGLFFCLGMVVFMLLGSVSP), serve as a signal peptide directing secretion. Over 28–585 (MNNEGKALMA…SLPKSQVFTR (558 aa)) the chain is Extracellular. N70 and N79 each carry an N-linked (GlcNAc...) asparagine glycan. LRR repeat units lie at residues 74-97 (NVVSLNLSNLNLGGEISSALGDLM), 98-120 (NLQSIDLQGNKLGGQIPDEIGNC), 122-145 (SLAYVDFSTNLLFGDIPFSISKLK), 146-166 (QLEFLNLKNNQLTGPIPATLT), 170-192 (NLKTLDLARNQLTGEIPRLLYWN), 194-216 (VLQYLGLRGNMLTGTLSPDMCQL), 218-240 (GLWYFDVRGNNLTGTIPESIGNC), 242-261 (SFEILDVSYNQITGVIPYNI), 265-287 (QVATLSLQGNKLTGRIPEVIGLM), 289-311 (ALAVLDLSDNELTGPIPPILGNL), 313-335 (FTGKLYLHGNKLTGQIPPELGNM), 337-359 (RLSYLQLNDNELVGKIPPELGKL), 361-382 (QLFELNLANNNLVGLIPSNISS), 385-406 (ALNQFNVHGNFLSGAVPLEFRN), 409-431 (SLTYLNLSSNSFKGKIPAELGHI), 433-456 (NLDTLDLSGNNFSGSIPLTLGDLE), 457-479 (HLLILNLSRNHLNGTLPAEFGNL), 481-503 (SIQIIDVSFNFLAGVIPTELGQL), 505-527 (NINSLILNNNKIHGKIPDQLTNC), and 529-550 (SLANLNISFNNLSGIIPPMKNF). N-linked (GlcNAc...) asparagine glycosylation is found at N228 and N239. N310 and N334 each carry an N-linked (GlcNAc...) asparagine glycan. An N-linked (GlcNAc...) asparagine glycan is attached at N379. 4 N-linked (GlcNAc...) asparagine glycosylation sites follow: N414, N443, N462, and N469. Residues N534, N539, and N549 are each glycosylated (N-linked (GlcNAc...) asparagine). The helical transmembrane segment at 586-606 (VAVICMVLGFITLICMIFIAV) threads the bilayer. The Cytoplasmic segment spans residues 607-967 (YKSKQQKPVL…FREDISKSSL (361 aa)). Phosphothreonine is present on residues T640 and T648. The region spanning 651-921 (LDEKYIIGYG…EVSRVLLSLV (271 aa)) is the Protein kinase domain. ATP is bound by residues 657–665 (IGYGASSTV) and K679. A phosphotyrosine mark is found at Y724 and Y763. Residue D776 is the Proton acceptor of the active site. The residue at position 818 (Y818) is a Phosphotyrosine. The residue at position 826 (T826) is a Phosphothreonine. Residues 921 to 955 (VPSPPPKKLPSPAKVQEGEERRESHSSDTTTPQWF) form a disordered region. The span at 936 to 946 (QEGEERRESHS) shows a compositional bias: basic and acidic residues.

It belongs to the protein kinase superfamily. Ser/Thr protein kinase family. As to expression, mostly expressed in developing organs, including bud clusters, flowers, siliques and young rosettes. Also detected in mature aboveground organs, such as leaves, stems and pedicels, but barely in roots.

The protein resides in the membrane. It carries out the reaction L-seryl-[protein] + ATP = O-phospho-L-seryl-[protein] + ADP + H(+). It catalyses the reaction L-threonyl-[protein] + ATP = O-phospho-L-threonyl-[protein] + ADP + H(+). In terms of biological role, receptor kinase that regulates inflorescence architecture and organ shape as well as stomatal patterning, including density and clustering, together with ERL1 and ER. The sequence is that of LRR receptor-like serine/threonine-protein kinase ERL2 (ERL2) from Arabidopsis thaliana (Mouse-ear cress).